Reading from the N-terminus, the 144-residue chain is Mediator of RNA polymerase II transcription subunit 21 (144 aa).

Belongs to the Mediator complex subunit 21 family. Interacts with PPARG. Component of the Mediator complex, which is composed of MED1, MED4, MED6, MED7, MED8, MED9, MED10, MED11, MED12, MED13, MED13L, MED14, MED15, MED16, MED17, MED18, MED19, MED20, MED21, MED22, MED23, MED24, MED25, MED26, MED27, MED29, MED30, MED31, CCNC, CDK8 and CDC2L6/CDK11. The MED12, MED13, CCNC and CDK8 subunits form a distinct module termed the CDK8 module. Mediator containing the CDK8 module is less active than Mediator lacking this module in supporting transcriptional activation. Individual preparations of the Mediator complex lacking one or more distinct subunits have been variously termed ARC, CRSP, DRIP, PC2, SMCC and TRAP. Interacts with THRA in a ligand-dependent fashion.

The protein localises to the nucleus. Its function is as follows. Component of the Mediator complex, a coactivator involved in the regulated transcription of nearly all RNA polymerase II-dependent genes. Mediator functions as a bridge to convey information from gene-specific regulatory proteins to the basal RNA polymerase II transcription machinery. Mediator is recruited to promoters by direct interactions with regulatory proteins and serves as a scaffold for the assembly of a functional preinitiation complex with RNA polymerase II and the general transcription factors. This Homo sapiens (Human) protein is Mediator of RNA polymerase II transcription subunit 21 (MED21).